The sequence spans 359 residues: Histamine H2 receptor (359 aa).

Residues 1-22 are Extracellular-facing; sequence MAFNGTVPSFCMDFTVYKVTIS. Asn4 carries N-linked (GlcNAc...) asparagine glycosylation. The helical transmembrane segment at 23–44 threads the bilayer; sequence VILIILILVTVAGNVVVCLAVG. The Cytoplasmic segment spans residues 45–57; that stretch reads LNRRLRSLTNCFI. Residues 58–81 traverse the membrane as a helical segment; the sequence is VSLAVTDLLLGLLVLPFSAIYQLS. Over 82–92 the chain is Extracellular; it reads CKWSFSKVFCN. A disulfide bridge links Cys91 with Cys174. Residues 93–114 form a helical membrane-spanning segment; sequence IYTSLDVMLCTASILNLFMISL. At 115–134 the chain is on the cytoplasmic side; that stretch reads DRYCAVTDPLRYPVLITPAR. A helical membrane pass occupies residues 135 to 159; it reads VAISLVFIWVISITLSFLSIHLGWN. Residues 160-180 lie on the Extracellular side of the membrane; the sequence is SRNETSKDNDTIVKCKVQVNE. A helical transmembrane segment spans residues 181–204; it reads VYGLVDGLVTFYLPLLIMCITYFR. The Cytoplasmic segment spans residues 205 to 234; sequence IFKIAREQARRINHIGSWKAATIREHKATV. A helical membrane pass occupies residues 235–258; sequence TLAAVMGAFIICWFPYFTVFVYRG. Residues 259–267 are Extracellular-facing; it reads LKGDDAVNE. The helical transmembrane segment at 268-289 threads the bilayer; sequence VFEDVVLWLGYANSALNPILYA. The Cytoplasmic segment spans residues 290–359; it reads ALNRDFRTAY…VTAPQGATNR (70 aa). Cys305 carries the S-palmitoyl cysteine lipid modification.

This sequence belongs to the G-protein coupled receptor 1 family.

The protein localises to the cell membrane. Its function is as follows. The H2 subclass of histamine receptors mediates gastric acid secretion. The activity of this receptor is mediated by G proteins which activate adenylyl cyclase. The chain is Histamine H2 receptor (HRH2) from Cavia porcellus (Guinea pig).